Here is a 397-residue protein sequence, read N- to C-terminus: Acetate kinase (397 aa).

Asn8 provides a ligand contact to Mg(2+). Position 15 (Lys15) interacts with ATP. Residue Arg89 participates in substrate binding. The active-site Proton donor/acceptor is Asp146. ATP contacts are provided by residues 206 to 210, 283 to 285, and 331 to 335; these read HVGNG, DMR, and GMGEN. Glu383 lines the Mg(2+) pocket.

It belongs to the acetokinase family. As to quaternary structure, homodimer. Mg(2+) is required as a cofactor. The cofactor is Mn(2+).

It is found in the cytoplasm. The catalysed reaction is acetate + ATP = acetyl phosphate + ADP. The protein operates within metabolic intermediate biosynthesis; acetyl-CoA biosynthesis; acetyl-CoA from acetate: step 1/2. Catalyzes the formation of acetyl phosphate from acetate and ATP. Can also catalyze the reverse reaction. This is Acetate kinase from Streptococcus agalactiae serotype III (strain NEM316).